Here is an 859-residue protein sequence, read N- to C-terminus: Leucine--tRNA ligase (859 aa).

Residues 42–52 (PYPSGRLHMGH) carry the 'HIGH' region motif. Positions 618–622 (KMSKS) match the 'KMSKS' region motif. K621 contacts ATP.

The protein belongs to the class-I aminoacyl-tRNA synthetase family.

Its subcellular location is the cytoplasm. It carries out the reaction tRNA(Leu) + L-leucine + ATP = L-leucyl-tRNA(Leu) + AMP + diphosphate. The sequence is that of Leucine--tRNA ligase from Shewanella sp. (strain W3-18-1).